The chain runs to 206 residues: Ras-related protein Rab-18 (206 aa).

An N-acetylmethionine modification is found at M1. Positions 17, 20, 21, 22, 23, 34, 35, 40, 66, 123, and 125 each coordinate GTP. S22 is a binding site for Mg(2+). Short sequence motifs (switch) lie at residues 31 to 45 (DTFD…GVDF) and 63 to 80 (DTAG…YYRG). T40 is a binding site for Mg(2+). S144 is modified (phosphoserine). A152 provides a ligand contact to GTP. Residue C199 is the site of S-palmitoyl cysteine attachment. C203 is subject to Cysteine methyl ester. C203 carries S-geranylgeranyl cysteine lipidation. The propeptide at 204 to 206 (SVL) is removed in mature form.

The protein belongs to the small GTPase superfamily. Rab family. In terms of assembly, interacts (in GTP-bound form) with ZFYVE1. Interacts with ZW10 and this interaction is enhanced in the presence of ZFYVE1. Interacts with BSCL2. The cofactor is Mg(2+).

It localises to the endoplasmic reticulum membrane. It is found in the golgi apparatus. Its subcellular location is the cis-Golgi network membrane. The protein localises to the lipid droplet. The protein resides in the apical cell membrane. The enzyme catalyses GTP + H2O = GDP + phosphate + H(+). Its activity is regulated as follows. Regulated by guanine nucleotide exchange factors (GEFs) which promote the exchange of bound GDP for free GTP. Regulated by GTPase activating proteins (GAPs) which increase the GTP hydrolysis activity at the ER membrane. Inhibited by GDP dissociation inhibitors (GDIs) which prevent Rab-GDP dissociation. Functionally, the small GTPases Rab are key regulators of intracellular membrane trafficking, from the formation of transport vesicles to their fusion with membranes. Rabs cycle between an inactive GDP-bound form and an active GTP-bound form that is able to recruit to membranes different sets of downstream effectors directly responsible for vesicle formation, movement, tethering and fusion. RAB18 is required for the localization of ZFYVE1 to lipid droplets and for its function in mediating the formation of endoplasmic reticulum-lipid droplets (ER-LD) contacts. Also required for maintaining endoplasmic reticulum structure. Plays a role in apical endocytosis/recycling. Plays a key role in eye and brain development and neurodegeneration. The chain is Ras-related protein Rab-18 (RAB18) from Bos taurus (Bovine).